We begin with the raw amino-acid sequence, 550 residues long: Envelope glycoprotein E (550 aa).

The first 23 residues, 1 to 23 (MELLAASRACIFFGLVTVLDAWG), serve as a signal peptide directing secretion. The Virion surface segment spans residues 24 to 408 (VQQVELSEGA…GAWTRHYLAF (385 aa)). An N-linked (GlcNAc...) asparagine; by host glycan is attached at asparagine 47. Positions 65 to 91 (CAGDISVKKVCVSHSLCEDNIIIGKHC) are interaction with gI. Asparagine 109, asparagine 122, and asparagine 241 each carry an N-linked (GlcNAc...) asparagine; by host glycan. 2 cysteine pairs are disulfide-bonded: cysteine 247–cysteine 273 and cysteine 256–cysteine 265. N-linked (GlcNAc...) asparagine; by host glycosylation occurs at asparagine 291. Cysteines 292 and 303 form a disulfide. Residues 409 to 425 (LLVIICTCAALLVALVV) traverse the membrane as a helical segment. Residues 426-550 (WGCILYIRSN…VASKLKSILK (125 aa)) lie on the Intravirion side of the membrane. The Internalization motif motif lies at 449–452 (YTSV). Residues 468 to 482 (ASDSDDSFDSDSDEE) form an acidic region. A compositionally biased stretch (acidic residues) spans 471 to 484 (SDDSFDSDSDEELE). The disordered stretch occupies residues 471 to 513 (SDDSFDSDSDEELEYPPPPKPAPQLPPYQFVDGGDAPSGRSGF). Residues 485–496 (YPPPPKPAPQLP) show a composition bias toward pro residues.

The protein belongs to the alphaherpesvirinae glycoprotein E family. Interacts with gI. In terms of processing, phosphorylated on serines within the acidic cluster. Phosphorylation determines whether endocytosed viral gE traffics to the trans-Golgi network or recycles to the cell membrane.

It is found in the virion membrane. The protein localises to the host cell membrane. The protein resides in the host cell junction. It localises to the host Golgi apparatus membrane. Its subcellular location is the host endosome membrane. Its function is as follows. In epithelial cells, the heterodimer gE/gI is required for the cell-to-cell spread of the virus, by sorting nascent virions to cell junctions. Once the virus reaches the cell junctions, virus particles can spread to adjacent cells extremely rapidly through interactions with cellular receptors that accumulate at these junctions. Implicated in basolateral spread in polarized cells. In neuronal cells, gE/gI is essential for the anterograde spread of the infection throughout the host nervous system. Together with US9, the heterodimer gE/gI is involved in the sorting and transport of viral structural components toward axon tips. This Equus caballus (Horse) protein is Envelope glycoprotein E (gE).